The sequence spans 270 residues: Orotidine 5'-phosphate decarboxylase (270 aa).

K95 acts as the Proton donor in catalysis.

It belongs to the OMP decarboxylase family. Type 2 subfamily.

It catalyses the reaction orotidine 5'-phosphate + H(+) = UMP + CO2. Its pathway is pyrimidine metabolism; UMP biosynthesis via de novo pathway; UMP from orotate: step 2/2. In Dechloromonas aromatica (strain RCB), this protein is Orotidine 5'-phosphate decarboxylase.